Reading from the N-terminus, the 320-residue chain is HPr kinase/phosphorylase (320 aa).

Active-site residues include His139 and Lys160. An ATP-binding site is contributed by 154–161 (GDSGVGKS). Ser161 provides a ligand contact to Mg(2+). The active-site Proton acceptor; for phosphorylation activity. Proton donor; for dephosphorylation activity is the Asp178. Positions 202-211 (MEIRGIGIID) are important for the catalytic mechanism of both phosphorylation and dephosphorylation. Glu203 contributes to the Mg(2+) binding site. The active site involves Arg244. The tract at residues 265-270 (PVKTGR) is important for the catalytic mechanism of dephosphorylation.

It belongs to the HPrK/P family. As to quaternary structure, homohexamer. The cofactor is Mg(2+).

The enzyme catalyses [HPr protein]-L-serine + ATP = [HPr protein]-O-phospho-L-serine + ADP + H(+). It carries out the reaction [HPr protein]-O-phospho-L-serine + phosphate + H(+) = [HPr protein]-L-serine + diphosphate. Its function is as follows. Catalyzes the ATP- as well as the pyrophosphate-dependent phosphorylation of a specific serine residue in HPr, a phosphocarrier protein of the phosphoenolpyruvate-dependent sugar phosphotransferase system (PTS). HprK/P also catalyzes the pyrophosphate-producing, inorganic phosphate-dependent dephosphorylation (phosphorolysis) of seryl-phosphorylated HPr (P-Ser-HPr). The two antagonistic activities of HprK/P are regulated by several intracellular metabolites, which change their concentration in response to the absence or presence of rapidly metabolisable carbon sources (glucose, fructose, etc.) in the growth medium. Therefore, by controlling the phosphorylation state of HPr, HPrK/P is a sensor enzyme that plays a major role in the regulation of carbon metabolism and sugar transport: it mediates carbon catabolite repression (CCR), and regulates PTS-catalyzed carbohydrate uptake and inducer exclusion. The chain is HPr kinase/phosphorylase from Limosilactobacillus reuteri (strain DSM 20016) (Lactobacillus reuteri).